Consider the following 100-residue polypeptide: Putative protein BCL8 (100 aa).

Expressed in prostate and testis.

This is Putative protein BCL8 (NBEAP1) from Homo sapiens (Human).